Reading from the N-terminus, the 379-residue chain is Sialidase-2 (379 aa).

The short motif at 20 to 23 is the FRIP motif element; that stretch reads YRIP. Residues Arg-21 and Arg-41 each coordinate substrate. The active-site Proton acceptor is the Asp-46. One copy of the BNR 1 repeat lies at 127–138; it reads ITSTDHGKTWSA. Tyr-179 and Tyr-181 together coordinate substrate. The BNR 2 repeat unit spans residues 197-208; the sequence is FLSHDHGSTWEL. Residues Glu-218, Arg-237, and Arg-303 each coordinate substrate. Tyr-333 functions as the Nucleophile in the catalytic mechanism. Residue Glu-354 is part of the active site.

It belongs to the glycosyl hydrolase 33 family.

The protein resides in the cytoplasm. The catalysed reaction is Hydrolysis of alpha-(2-&gt;3)-, alpha-(2-&gt;6)-, alpha-(2-&gt;8)- glycosidic linkages of terminal sialic acid residues in oligosaccharides, glycoproteins, glycolipids, colominic acid and synthetic substrates.. In terms of biological role, catalyzes the removal of sialic acid (N-acetylneuraminic acid) moieties from glycoproteins, oligosaccharides and gangliosides. This Cricetulus griseus (Chinese hamster) protein is Sialidase-2 (NEU2).